Here is a 223-residue protein sequence, read N- to C-terminus: Alpha-S2-casein (223 aa).

Positions 1–15 (MKFFIFTCLLAVALA) are cleaved as a signal peptide. A phosphoserine mark is found at S23, S24, S25, S72, S73, S74, S77, S145, S147, S151, and S159. A repeat spans 77-141 (SAEVAPEEVK…AGPFTPTVNR (65 aa)). The stretch at residues 159–223 (STEVFTKKTK…TNAIPYVRYL (65 aa)) is a repeat.

This sequence belongs to the alpha-casein family. Mammary gland specific. Secreted in milk.

Its subcellular location is the secreted. Functionally, important role in the capacity of milk to transport calcium phosphate. The sequence is that of Alpha-S2-casein (CSN1S2) from Ovis aries (Sheep).